Consider the following 393-residue polypeptide: Protein TsgA (393 aa).

Helical transmembrane passes span 11 to 31 (WISF…GMVM), 51 to 71 (FLNA…EIVP), 78 to 98 (FGFL…SLAL), 101 to 121 (TAMF…TFLI), 134 to 154 (LLFT…IAAF), 162 to 182 (WYWV…LTFG), 206 to 226 (IGVL…LGFI), 245 to 265 (TLVS…SFIL), 273 to 293 (ILTV…TGTP), 297 to 317 (AWSI…IITL), 332 to 352 (FVLT…GPIV), and 361 to 381 (LLTA…LGFV).

The protein belongs to the major facilitator superfamily. TsgA family.

The protein resides in the cell inner membrane. This is Protein TsgA from Shigella boydii serotype 4 (strain Sb227).